We begin with the raw amino-acid sequence, 259 residues long: 3-oxo-5-alpha-steroid 4-dehydrogenase 1 (259 aa).

5 helical membrane passes run 10–30 (LCLL…SIVG), 86–106 (VLLA…PVLI), 111–131 (PTLL…GYVQ), 146–166 (VTHP…VINI), and 206–226 (WCGF…LFTL).

The protein belongs to the steroid 5-alpha reductase family. Liver and prostate (at a low level).

The protein resides in the microsome membrane. Its subcellular location is the endoplasmic reticulum membrane. The catalysed reaction is a 3-oxo-5alpha-steroid + NADP(+) = a 3-oxo-Delta(4)-steroid + NADPH + H(+). It catalyses the reaction 5alpha-pregnane-3,20-dione + NADP(+) = progesterone + NADPH + H(+). The enzyme catalyses 17beta-hydroxy-5alpha-androstan-3-one + NADP(+) = testosterone + NADPH + H(+). It carries out the reaction androst-4-ene-3,17-dione + NADPH + H(+) = 5alpha-androstan-3,17-dione + NADP(+). Converts testosterone into 5-alpha-dihydrotestosterone and progesterone or corticosterone into their corresponding 5-alpha-3-oxosteroids. It plays a central role in sexual differentiation and androgen physiology. This is 3-oxo-5-alpha-steroid 4-dehydrogenase 1 from Rattus norvegicus (Rat).